Reading from the N-terminus, the 287-residue chain is tRNA selenocysteine 1-associated protein 1 (287 aa).

RRM domains are found at residues 3 to 86 (ASLW…YATY) and 96 to 175 (YSLF…VAIP).

It belongs to the RRM TRSPAP family. As to quaternary structure, component of the tRNA(Sec) complex composed at least of EEFSEC, SECISBP2, SEPHS1, SEPSECS, TRNAU1AP and tRNA(Sec). Found in a complex with tRNA(Sec). Interacts with SEPSECS. Associates with mRNP and/or polysomes. Found in a complex with EEFSEC, SECISBP2, TRNAU1AP and tRNA(Sec).

The protein resides in the nucleus. Its subcellular location is the cytoplasm. Involved in the early steps of selenocysteine biosynthesis and tRNA(Sec) charging to the later steps resulting in the cotranslational incorporation of selenocysteine into selenoproteins. Stabilizes the SECISBP2, EEFSEC and tRNA(Sec) complex. May be involved in the methylation of tRNA(Sec). Enhances efficiency of selenoproteins synthesis. The sequence is that of tRNA selenocysteine 1-associated protein 1 (TRNAU1AP) from Bos taurus (Bovine).